A 224-amino-acid polypeptide reads, in one-letter code: UPF0758 protein Hhal_2301 (224 aa).

Residues 102–224 (TLSSPAQTRT…PVSLAERGVL (123 aa)) enclose the MPN domain. Positions 173, 175, and 186 each coordinate Zn(2+). The JAMM motif signature appears at 173 to 186 (HNHPSGITEPSAAD).

Belongs to the UPF0758 family.

This chain is UPF0758 protein Hhal_2301, found in Halorhodospira halophila (strain DSM 244 / SL1) (Ectothiorhodospira halophila (strain DSM 244 / SL1)).